A 402-amino-acid polypeptide reads, in one-letter code: Cysteine-rich venom protein (402 aa).

Positions 1–13 (MNLALFIIFATIF) are cleaved as a signal peptide. An SCP domain is found at 57-199 (LETHNQLRNK…VKKVLYTCNY (143 aa)).

This sequence belongs to the CRISP family. In terms of processing, contains 7 disulfide bonds. As to expression, expressed by the venom gland.

Its subcellular location is the secreted. This Tityus serrulatus (Brazilian scorpion) protein is Cysteine-rich venom protein.